The sequence spans 380 residues: Erythronate-4-phosphate dehydrogenase (380 aa).

Residues Ser-45 and Thr-66 each coordinate substrate. Position 146 (Asp-146) interacts with NAD(+). Arg-207 is a catalytic residue. Asp-232 contributes to the NAD(+) binding site. Glu-237 is a catalytic residue. His-254 serves as the catalytic Proton donor. Gly-257 lines the NAD(+) pocket. Tyr-258 is a binding site for substrate.

It belongs to the D-isomer specific 2-hydroxyacid dehydrogenase family. PdxB subfamily. Homodimer.

Its subcellular location is the cytoplasm. It catalyses the reaction 4-phospho-D-erythronate + NAD(+) = (R)-3-hydroxy-2-oxo-4-phosphooxybutanoate + NADH + H(+). It participates in cofactor biosynthesis; pyridoxine 5'-phosphate biosynthesis; pyridoxine 5'-phosphate from D-erythrose 4-phosphate: step 2/5. Catalyzes the oxidation of erythronate-4-phosphate to 3-hydroxy-2-oxo-4-phosphonooxybutanoate. This is Erythronate-4-phosphate dehydrogenase from Marinomonas sp. (strain MWYL1).